Reading from the N-terminus, the 100-residue chain is Large ribosomal subunit protein uL23 (100 aa).

It belongs to the universal ribosomal protein uL23 family. As to quaternary structure, part of the 50S ribosomal subunit. Contacts protein L29, and trigger factor when it is bound to the ribosome.

One of the early assembly proteins it binds 23S rRNA. One of the proteins that surrounds the polypeptide exit tunnel on the outside of the ribosome. Forms the main docking site for trigger factor binding to the ribosome. This is Large ribosomal subunit protein uL23 from Prochlorococcus marinus subsp. pastoris (strain CCMP1986 / NIES-2087 / MED4).